The chain runs to 80 residues: MAFLKKSLFLVLFLGLVSLSICEEEKRENEDEEEQEDDEQSEMKRGMWSTIRNVGKSAAKAANLPAKAALGAISEAVGEQ.

Residues Met1 to Cys22 form the signal peptide. The propeptide occupies Glu23–Met43. The disordered stretch occupies residues Glu24–Arg45. Positions Glu30–Gln40 are enriched in acidic residues. Val77 is modified (valine amide). Positions Glu79 to Gln80 are excised as a propeptide.

It belongs to the frog skin active peptide (FSAP) family. Dermaseptin subfamily. As to expression, expressed by the skin glands.

The protein resides in the secreted. In terms of biological role, possesses a potent antimicrobial activity against Gram-positive and Gram-negative bacteria. Probably acts by disturbing membrane functions with its amphipathic structure. The protein is Dermaseptin-A5 of Agalychnis annae (Blue-sided leaf frog).